The sequence spans 154 residues: GTP-dependent dephospho-CoA kinase (154 aa).

GTP-binding residues include D34, D53, and E107.

This sequence belongs to the GTP-dependent DPCK family.

The enzyme catalyses 3'-dephospho-CoA + GTP = GDP + CoA + H(+). It participates in cofactor biosynthesis; coenzyme A biosynthesis. Catalyzes the GTP-dependent phosphorylation of the 3'-hydroxyl group of dephosphocoenzyme A to form coenzyme A (CoA). The chain is GTP-dependent dephospho-CoA kinase from Nitrosopumilus maritimus (strain SCM1).